Reading from the N-terminus, the 296-residue chain is Glycine--tRNA ligase alpha subunit (296 aa).

The protein belongs to the class-II aminoacyl-tRNA synthetase family. Tetramer of two alpha and two beta subunits.

The protein resides in the cytoplasm. It catalyses the reaction tRNA(Gly) + glycine + ATP = glycyl-tRNA(Gly) + AMP + diphosphate. The chain is Glycine--tRNA ligase alpha subunit from Francisella tularensis subsp. holarctica (strain FTNF002-00 / FTA).